Reading from the N-terminus, the 124-residue chain is Small ribosomal subunit protein uS12 (124 aa).

Asp89 carries the post-translational modification 3-methylthioaspartic acid.

Belongs to the universal ribosomal protein uS12 family. Part of the 30S ribosomal subunit. Contacts proteins S8 and S17. May interact with IF1 in the 30S initiation complex.

With S4 and S5 plays an important role in translational accuracy. In terms of biological role, interacts with and stabilizes bases of the 16S rRNA that are involved in tRNA selection in the A site and with the mRNA backbone. Located at the interface of the 30S and 50S subunits, it traverses the body of the 30S subunit contacting proteins on the other side and probably holding the rRNA structure together. The combined cluster of proteins S8, S12 and S17 appears to hold together the shoulder and platform of the 30S subunit. The polypeptide is Small ribosomal subunit protein uS12 (Histophilus somni (strain 129Pt) (Haemophilus somnus)).